The sequence spans 72 residues: Large ribosomal subunit protein bL28 (72 aa).

This sequence belongs to the bacterial ribosomal protein bL28 family.

The chain is Large ribosomal subunit protein bL28 from Chlorobium chlorochromatii (strain CaD3).